We begin with the raw amino-acid sequence, 807 residues long: Probable E3 ubiquitin-protein ligase mug30 (807 aa).

Residues 453-807 (RNKDFRKALK…LLETNGFNIR (355 aa)) form the HECT domain. The active-site Glycyl thioester intermediate is the Cys775.

It is found in the cytoplasm. The protein localises to the cytoskeleton. Its subcellular location is the microtubule organizing center. It localises to the spindle pole body. It carries out the reaction S-ubiquitinyl-[E2 ubiquitin-conjugating enzyme]-L-cysteine + [acceptor protein]-L-lysine = [E2 ubiquitin-conjugating enzyme]-L-cysteine + N(6)-ubiquitinyl-[acceptor protein]-L-lysine.. It functions in the pathway protein modification; protein ubiquitination. In terms of biological role, probable E3 ubiquitin-protein ligase. Has a role in meiosis. In Schizosaccharomyces pombe (strain 972 / ATCC 24843) (Fission yeast), this protein is Probable E3 ubiquitin-protein ligase mug30 (mug30).